The chain runs to 1940 residues: Cilia- and flagella-associated protein 74 (1940 aa).

The segment at 52-90 is disordered; sequence GSPAVTLRRAKAAAAANGTSSPGIRGSPSPARGPGGRLP. Residues 63–90 show a composition bias toward low complexity; that stretch reads AAAAANGTSSPGIRGSPSPARGPGGRLP. The stretch at 100 to 159 forms a coiled coil; that stretch reads ANVEQLKRRLQTVVAEVEGHQQRYDKVLLEANKATDLVHSMEAEIESLYVEAEELARRVP. Disordered stretches follow at residues 512–548, 1159–1336, 1373–1418, 1714–1737, and 1894–1940; these read VAGLGRGGGSDDEDGMGSPPRSPSLTQQLAATQQSLT, SPHV…AAAE, PQSQ…AAPP, AGDKPSTPAPGIKPPATPPGGASK, and PGSR…KKAV. Residues 535–548 show a composition bias toward low complexity; the sequence is SLTQQLAATQQSLT. Gly residues predominate over residues 1205–1220; that stretch reads DGGGGGAMANGNGSGG. Residues 1227-1236 are compositionally biased toward acidic residues; sequence DGEPEDGEGD. The span at 1260-1271 shows a compositional bias: gly residues; that stretch reads GRGGRGGRGGAA. The span at 1272–1282 shows a compositional bias: acidic residues; it reads GEDEDEDEDAG. Residues 1287–1304 show a composition bias toward low complexity; it reads RGKSSSSSKASSGRRSSS. Acidic residues predominate over residues 1321-1335; that stretch reads VPDDDDADAEAEAAA. Residues 1373-1414 show a composition bias toward low complexity; the sequence is PQSQNPTPSQSQSGQAPAASAPSDGASGAAAAAETAASSGPA. Pro residues-rich tracts occupy residues 1720–1731 and 1896–1912; these read TPAPGIKPPATP and SRPPGEPVPPGVTPAPE. Low complexity predominate over residues 1913-1929; the sequence is PVAASGPGAGAAGVKKL. The segment covering 1930–1940 has biased composition (pro residues); that stretch reads VPPPSPPKKAV.

This sequence belongs to the CFAP74 family. In terms of assembly, part of the PDCP1 complex composed of CFAP46, CFAP54, CFAP74 and CFAP221; the PDCP1 complex binds calmodulin.

The protein resides in the cytoplasm. The protein localises to the cytoskeleton. It is found in the cilium axoneme. As part of the central apparatus of the cilium axoneme may play a role in cilium movement and thereby cell motility. This is Cilia- and flagella-associated protein 74 from Chlamydomonas reinhardtii (Chlamydomonas smithii).